We begin with the raw amino-acid sequence, 160 residues long: 2-amino-4-hydroxy-6-hydroxymethyldihydropteridine pyrophosphokinase (160 aa).

This sequence belongs to the HPPK family.

The enzyme catalyses 6-hydroxymethyl-7,8-dihydropterin + ATP = (7,8-dihydropterin-6-yl)methyl diphosphate + AMP + H(+). It participates in cofactor biosynthesis; tetrahydrofolate biosynthesis; 2-amino-4-hydroxy-6-hydroxymethyl-7,8-dihydropteridine diphosphate from 7,8-dihydroneopterin triphosphate: step 4/4. In terms of biological role, catalyzes the transfer of pyrophosphate from adenosine triphosphate (ATP) to 6-hydroxymethyl-7,8-dihydropterin, an enzymatic step in folate biosynthesis pathway. The sequence is that of 2-amino-4-hydroxy-6-hydroxymethyldihydropteridine pyrophosphokinase (folK) from Aquifex aeolicus (strain VF5).